The sequence spans 389 residues: Probable acyl-CoA dehydrogenase fadE25 (389 aa).

It belongs to the acyl-CoA dehydrogenase family. The cofactor is FAD.

It catalyses the reaction a 2,3-saturated acyl-CoA + A = a 2,3-dehydroacyl-CoA + AH2. The polypeptide is Probable acyl-CoA dehydrogenase fadE25 (fadE25) (Mycobacterium bovis (strain ATCC BAA-935 / AF2122/97)).